Consider the following 258-residue polypeptide: UPF0246 protein YaaA (258 aa).

It belongs to the UPF0246 family.

The polypeptide is UPF0246 protein YaaA (Escherichia coli O6:K15:H31 (strain 536 / UPEC)).